An 85-amino-acid polypeptide reads, in one-letter code: Large ribosomal subunit protein bL27 (85 aa).

Residues 1–23 (MAHKKGQGSTQNNRDSAGRRLGV) are disordered.

Belongs to the bacterial ribosomal protein bL27 family.

This chain is Large ribosomal subunit protein bL27, found in Aliarcobacter butzleri (strain RM4018) (Arcobacter butzleri).